A 128-amino-acid polypeptide reads, in one-letter code: Probable 4-amino-4-deoxy-L-arabinose-phosphoundecaprenol flippase subunit ArnF (128 aa).

Topologically, residues 1 to 2 (MG) are cytoplasmic. The chain crosses the membrane as a helical span at residues 3–23 (LMWGLFSVIIASAAQLSLGFA). Topologically, residues 24–35 (ASHLPPMTHLWD) are periplasmic. The helical transmembrane segment at 36-56 (FIAALLAFGLDARILLLGLLG) threads the bilayer. At 57–76 (YLLSVFCWYKTLHKLALSKA) the chain is on the cytoplasmic side. A helical transmembrane segment spans residues 77-97 (YALLSMSYVLVWIASMILPGW). Residues 98–100 (EGT) are Periplasmic-facing. Residues 101–121 (FSLKALLGVACIMSGLMLIFL) form a helical membrane-spanning segment. Topologically, residues 122-128 (PTTKQRY) are cytoplasmic.

This sequence belongs to the ArnF family. In terms of assembly, heterodimer of ArnE and ArnF.

Its subcellular location is the cell inner membrane. It functions in the pathway bacterial outer membrane biogenesis; lipopolysaccharide biosynthesis. Functionally, translocates 4-amino-4-deoxy-L-arabinose-phosphoundecaprenol (alpha-L-Ara4N-phosphoundecaprenol) from the cytoplasmic to the periplasmic side of the inner membrane. In Escherichia coli O17:K52:H18 (strain UMN026 / ExPEC), this protein is Probable 4-amino-4-deoxy-L-arabinose-phosphoundecaprenol flippase subunit ArnF.